A 512-amino-acid chain; its full sequence is MPEKYVAAIDQGTTSTRCILFRHDGSIATVAQFEHKQIFPKKGWVEHDANEIWNNTRRAVGEAMAELDISVNDVVSVGITNQRETTVVWDKNTGEPIYNAIVWQDTRTNDIAQRLAGDEGPDRWRKTTGVRLNSYPAGPKIMWILENVEGAREKAEKGDLLFGTIDTWLLWNLTGGVDGDNGNPALHVTDVTNASRTSLMDLKTLKWDEDLCKAMDIPQSMLPEIRPSIGDFRTVRARGSLAGVPIRGVLGDQQAAMFGQCCFGNGDAKNTYGTGLFMLLNTGAKPKWSDNGLITTVCYQIENQKPVYALEGSVAMGGSLVQWLRDNLQLIPNAPSVENMAKSVEDNGGVYFVPAFSGLFAPRWRPDARGAIVGLTRFANRNHLARAVLEATAYQTREVLDAMVTDSGVDINALKVDGGMVMNEFLMQFQSDIINTEVVRPKNIETTALGAAYAAGLSAGFWDSLNELKEQSTVDKVWKPKMGEDERKQLYSDWNRAVERTYNWEESTNEPS.

Position 13 (Thr13) interacts with ADP. Thr13, Thr14, and Ser15 together coordinate ATP. A sn-glycerol 3-phosphate-binding site is contributed by Thr13. Arg17 contributes to the ADP binding site. Positions 83, 84, 135, and 252 each coordinate sn-glycerol 3-phosphate. Positions 83, 84, 135, 252, and 253 each coordinate glycerol. ADP is bound by residues Thr274 and Gly318. ATP-binding residues include Thr274, Gly318, Gln322, and Gly419. 2 residues coordinate ADP: Gly419 and Asn423.

Belongs to the FGGY kinase family.

It carries out the reaction glycerol + ATP = sn-glycerol 3-phosphate + ADP + H(+). It functions in the pathway polyol metabolism; glycerol degradation via glycerol kinase pathway; sn-glycerol 3-phosphate from glycerol: step 1/1. With respect to regulation, inhibited by fructose 1,6-bisphosphate (FBP). Key enzyme in the regulation of glycerol uptake and metabolism. Catalyzes the phosphorylation of glycerol to yield sn-glycerol 3-phosphate. In Corynebacterium kroppenstedtii (strain DSM 44385 / JCM 11950 / CIP 105744 / CCUG 35717), this protein is Glycerol kinase.